The chain runs to 97 residues: Ataxin-7-like protein 3B (97 aa).

The interval 76-97 (SLPGDPGDGPQTELQRSPPEFQ) is disordered. Phosphoserine is present on Ser-92.

The protein belongs to the SGF11 family. As to quaternary structure, interacts strongly with ENY2. Interacts weakly with USP22.

It is found in the cytoplasm. Functionally, by binding to ENY2, interferes with the nuclear functions of the deubiquitinase (DUB) module of the SAGA complex which consists of ENY2, ATXN7, ATXN7L3 and the histone deubiquitinating component USP22. Affects USP22 DUB activity toward histones indirectly by changing the subcellular distribution of ENY2 and altering ENY2 availability for ATXN7L3 interaction. Regulates H2B monoubiquitination (H2Bub1) levels through cytoplasmic sequestration of ENY2 resulting in loss of nuclear ENY2-ATXN7L3 association which destabilizes ATXN7L3. Affects protein expression levels of ENY2 and ATXN7L3. This Mus musculus (Mouse) protein is Ataxin-7-like protein 3B (Atxn7l3b).